We begin with the raw amino-acid sequence, 156 residues long: Transcriptional regulator MraZ (156 aa).

2 SpoVT-AbrB domains span residues K7–V64 and L93–R136.

It belongs to the MraZ family. In terms of assembly, forms oligomers.

It is found in the cytoplasm. The protein localises to the nucleoid. The chain is Transcriptional regulator MraZ from Chlorobium phaeovibrioides (strain DSM 265 / 1930) (Prosthecochloris vibrioformis (strain DSM 265)).